Consider the following 292-residue polypeptide: Undecaprenyl-diphosphatase (292 aa).

The next 7 membrane-spanning stretches (helical) occupy residues 1 to 21, 46 to 66, 88 to 108, 114 to 134, 192 to 212, 225 to 245, and 253 to 273; these read MSLV…FLPV, FVTI…RADI, ARLG…GKLL, ALGN…LLAA, FLLS…STVP, VVGT…LLAW, and VFVV…LSGV.

This sequence belongs to the UppP family.

The protein resides in the cell inner membrane. It catalyses the reaction di-trans,octa-cis-undecaprenyl diphosphate + H2O = di-trans,octa-cis-undecaprenyl phosphate + phosphate + H(+). Functionally, catalyzes the dephosphorylation of undecaprenyl diphosphate (UPP). Confers resistance to bacitracin. This is Undecaprenyl-diphosphatase from Anaeromyxobacter dehalogenans (strain 2CP-C).